Consider the following 917-residue polypeptide: Protein Ami (917 aa).

A signal peptide spans 1–30; the sequence is MKKLVKSAVVFAGLVFIGTSATMITEKASA. In terms of domain architecture, N-acetylmuramoyl-L-alanine amidase spans 118–245; the sequence is KPEGIVIHET…YLGGTTHTDP (128 aa). The tract at residues 262–917 is GW repeat region, necessary and sufficient for cell surface attachment; that stretch reads LINEKYKAMQ…KAANLSAKKQ (656 aa). GW domains lie at 279 to 358, 361 to 435, 440 to 519, 522 to 596, 601 to 679, 682 to 756, 761 to 840, and 843 to 917; these read YDKA…TFYT, MEKT…TTKY, MEKN…ATQY, and MEKN…AKKQ.

It in the N-terminal section; belongs to the N-acetylmuramoyl-L-alanine amidase 2 family.

It localises to the cell surface. It is found in the cell membrane. Functionally, a bacteriolysin able to lyse both L.monocytogenes and S.aureus. This chain is Protein Ami, found in Listeria monocytogenes serotype 1/2a (strain EGD / Mackaness).